A 20-amino-acid chain; its full sequence is Toxin TpF21-Cocle (20 aa).

The region spanning 1 to 20 is the LCN-type CS-alpha/beta domain; that stretch reads KDGYLVGNDGCKYSCNTYPK.

It belongs to the long (4 C-C) scorpion toxin superfamily. Sodium channel inhibitor family. Beta subfamily. As to expression, expressed by the venom gland.

Its subcellular location is the secreted. Functionally, beta toxins bind voltage-independently at site-4 of sodium channels (Nav) and shift the voltage of activation toward more negative potentials thereby affecting sodium channel activation and promoting spontaneous and repetitive firing. This chain is Toxin TpF21-Cocle, found in Tityus pachyurus (Colombian scorpion).